A 366-amino-acid chain; its full sequence is MAP kinase-activated protein kinase 2 (366 aa).

In terms of domain architecture, Protein kinase spans 30-291 (KVTSQVLGLG…ITEFMNHPWI (262 aa)). Residues 36–44 (LGLGINGKV) and lysine 59 contribute to the ATP site. Residue 105 to 107 (ECL) coordinates staurosporine. Catalysis depends on aspartate 152, which acts as the Proton acceptor. Threonine 188 is modified (phosphothreonine; by MAPK14). Residue serine 238 is modified to Phosphoserine; by MAPK14. Serine 294 bears the Phosphoserine; by autocatalysis mark. The interval 294–330 (STKVPQTPLHTSRVLKEDKERWEDVKEEMTSALATMR) is autoinhibitory helix. Threonine 300 bears the Phosphothreonine; by MAPK14 mark. Lysine 319 participates in a covalent cross-link: Glycyl lysine isopeptide (Lys-Gly) (interchain with G-Cter in SUMO). The short motif at 322–331 (MTSALATMRV) is the Nuclear export signal (NES) element. Residues 332–356 (DYEQIKIKKIEDASNPLLLKRRKKA) form a p38 MAPK-binding site region. 2 short sequence motifs (bipartite nuclear localization signal) span residues 337-340 (KIKK) and 351-355 (KRRKK).

Belongs to the protein kinase superfamily. CAMK Ser/Thr protein kinase family. In terms of assembly, heterodimer with p38-alpha/MAPK14; this heterodimer forms a stable complex: molecules are positioned 'face to face' so that the ATP-binding sites of both kinases are at the heterodimer interface. Interacts with PHC2. Interacts with HSF1. Sumoylation inhibits the protein kinase activity. Post-translationally, phosphorylated and activated by MAP kinase p38-alpha/MAPK14 at Thr-188, Ser-238 and Thr-300.

It is found in the cytoplasm. The protein resides in the nucleus. It catalyses the reaction L-seryl-[protein] + ATP = O-phospho-L-seryl-[protein] + ADP + H(+). The enzyme catalyses L-threonyl-[protein] + ATP = O-phospho-L-threonyl-[protein] + ADP + H(+). With respect to regulation, activated following phosphorylation by p38-alpha/MAPK14 following various stresses. Inhibited following sumoylation. Specifically inhibited by pyrrolopyridine inhibitors. Stress-activated serine/threonine-protein kinase involved in cytokine production, endocytosis, reorganization of the cytoskeleton, cell migration, cell cycle control, chromatin remodeling, DNA damage response and transcriptional regulation. Following stress, it is phosphorylated and activated by MAP kinase p38-alpha/MAPK14, leading to phosphorylation of substrates. Phosphorylates serine in the peptide sequence, Hyd-X-R-X(2)-S, where Hyd is a large hydrophobic residue. Phosphorylates ALOX5, CDC25B, CDC25C, CEP131, ELAVL1, HNRNPA0, HSP27/HSPB1, KRT18, KRT20, LIMK1, LSP1, PABPC1, PARN, PDE4A, RCSD1, RPS6KA3, TAB3 and TTP/ZFP36. Phosphorylates HSF1; leading to the interaction with HSP90 proteins and inhibiting HSF1 homotrimerization, DNA-binding and transactivation activities. Mediates phosphorylation of HSP27/HSPB1 in response to stress, leading to dissociation of HSP27/HSPB1 from large small heat-shock protein (sHsps) oligomers and impairment of their chaperone activities and ability to protect against oxidative stress effectively. Involved in inflammatory response by regulating tumor necrosis factor (TNF) and IL6 production post-transcriptionally: acts by phosphorylating AU-rich elements (AREs)-binding proteins ELAVL1, HNRNPA0, PABPC1 and TTP/ZFP36, leading to regulate the stability and translation of TNF and IL6 mRNAs. Phosphorylation of TTP/ZFP36, a major post-transcriptional regulator of TNF, promotes its binding to 14-3-3 proteins and reduces its ARE mRNA affinity leading to inhibition of dependent degradation of ARE-containing transcripts. Phosphorylates CEP131 in response to cellular stress following ultraviolet irradiation which promotes binding of CEP131 to 14-3-3 proteins and inhibits formation of novel centriolar satellites. Also involved in late G2/M checkpoint following DNA damage through a process of post-transcriptional mRNA stabilization: following DNA damage, relocalizes from nucleus to cytoplasm and phosphorylates HNRNPA0 and PARN, leading to stabilization of GADD45A mRNA. Involved in toll-like receptor signaling pathway (TLR) in dendritic cells: required for acute TLR-induced macropinocytosis by phosphorylating and activating RPS6KA3. The chain is MAP kinase-activated protein kinase 2 (MAPKAPK2) from Oryctolagus cuniculus (Rabbit).